We begin with the raw amino-acid sequence, 2091 residues long: Protein Ycf2 (2091 aa).

Positions 191 to 210 (DSSQLKGSSDQSRDPLDSIS) are disordered. Position 1432–1439 (1432–1439 (GSIGTGRS)) interacts with ATP.

It belongs to the Ycf2 family.

The protein localises to the plastid. The protein resides in the chloroplast stroma. Probable ATPase of unknown function. Its presence in a non-photosynthetic plant (Epifagus virginiana) and experiments in tobacco indicate that it has an essential function which is probably not related to photosynthesis. This is Protein Ycf2 from Daucus carota (Wild carrot).